A 253-amino-acid chain; its full sequence is Endonuclease NucS (253 aa).

Residues 63 to 91 (IDDPDTDFTDGSSVGNSEEQGTDGSAHTA) are disordered. Residues 71–87 (TDGSSVGNSEEQGTDGS) show a composition bias toward polar residues.

This sequence belongs to the NucS endonuclease family.

Its subcellular location is the cytoplasm. Functionally, cleaves both 3' and 5' ssDNA extremities of branched DNA structures. The polypeptide is Endonuclease NucS (Corynebacterium kroppenstedtii (strain DSM 44385 / JCM 11950 / CIP 105744 / CCUG 35717)).